The chain runs to 455 residues: uncharacterized protein (455 aa).

Asn42, Asn49, and Asn70 each carry an N-linked (GlcNAc...) asparagine glycan. Transmembrane regions (helical) follow at residues 127-147, 153-173, 177-197, and 377-397; these read AILI…TWIF, SLLD…MFRI, ICAL…ITYY, and YKFC…EIIF. Asn403 is a glycosylation site (N-linked (GlcNAc...) asparagine).

Its subcellular location is the membrane. This is an uncharacterized protein from Caenorhabditis elegans.